Consider the following 86-residue polypeptide: uncharacterized protein (86 aa).

A run of 3 helical transmembrane segments spans residues 4–24 (ILIIAEYTLLASLAVFSIAAV), 34–54 (MGLVGISGLNIAIATILILIN), and 64–84 (DIAYALVLLGPVGTIAFARVL).

To M.jannaschii MJ1223.

The protein localises to the cell membrane. This is an uncharacterized protein from Methanothermobacter thermautotrophicus (strain ATCC 29096 / DSM 1053 / JCM 10044 / NBRC 100330 / Delta H) (Methanobacterium thermoautotrophicum).